Reading from the N-terminus, the 292-residue chain is 2-(5''-triphosphoribosyl)-3'-dephosphocoenzyme-A synthase (292 aa).

It belongs to the CitG/MdcB family.

It catalyses the reaction 3'-dephospho-CoA + ATP = 2'-(5''-triphospho-alpha-D-ribosyl)-3'-dephospho-CoA + adenine. In terms of biological role, catalyzes the formation of 2-(5''-triphosphoribosyl)-3'-dephosphocoenzyme-A, the precursor of the prosthetic group of the holo-acyl carrier protein (gamma chain) of citrate lyase, from ATP and dephospho-CoA. In Escherichia coli O139:H28 (strain E24377A / ETEC), this protein is 2-(5''-triphosphoribosyl)-3'-dephosphocoenzyme-A synthase.